The primary structure comprises 328 residues: Phenylalanine--tRNA ligase alpha subunit (328 aa).

This sequence belongs to the class-II aminoacyl-tRNA synthetase family. Phe-tRNA synthetase alpha subunit type 1 subfamily. As to quaternary structure, tetramer of two alpha and two beta subunits. Mg(2+) is required as a cofactor.

The protein localises to the cytoplasm. It catalyses the reaction tRNA(Phe) + L-phenylalanine + ATP = L-phenylalanyl-tRNA(Phe) + AMP + diphosphate + H(+). The chain is Phenylalanine--tRNA ligase alpha subunit from Buchnera aphidicola subsp. Baizongia pistaciae (strain Bp).